The following is an 896-amino-acid chain: Myelin regulatory factor-like protein (896 aa).

The segment at residues 111-403 is a DNA-binding region (NDT80); the sequence is GLPHRTFHNC…SNPGQFENDI (293 aa). Positions 449 to 557 constitute a Peptidase S74 domain; it reads SDSRAKQNVQ…KLTNNLEERI (109 aa). A coiled-coil region spans residues 541-573; that stretch reads GAVKQLCKLTNNLEERIEELEIWNRKLARLKRL. Residues 622-638 form a helical membrane-spanning segment; that stretch reads VFQSLVITLIAVMAFCL. A compositionally biased stretch (polar residues) spans 648–658; sequence APSSNLTSSQE. The segment at 648–672 is disordered; that stretch reads APSSNLTSSQEPALPSTASPSAPNT. The segment covering 659 to 672 has biased composition (low complexity); it reads PALPSTASPSAPNT.

The protein belongs to the MRF family.

Its subcellular location is the membrane. The protein is Myelin regulatory factor-like protein (MYRFL) of Bos taurus (Bovine).